We begin with the raw amino-acid sequence, 201 residues long: Lipopolysaccharide core heptose(II)-phosphate phosphatase (201 aa).

The signal sequence occupies residues 1–33 (MLAFTLRFIKNKRYFAILAGALVIIAGLASQHA).

This sequence belongs to the phosphoglycerate mutase family. Ais subfamily.

It is found in the periplasm. The protein operates within bacterial outer membrane biogenesis; lipopolysaccharide metabolism. Its function is as follows. Catalyzes the dephosphorylation of heptose(II) of the outer membrane lipopolysaccharide core. In Salmonella typhi, this protein is Lipopolysaccharide core heptose(II)-phosphate phosphatase.